The primary structure comprises 256 residues: Protein RGF1 INDUCIBLE TRANSCRIPTION FACTOR 1 (256 aa).

A B box-type zinc finger spans residues 21–59; it reads CPYHETAKKNERNVCCLDCCTSLCPHCVPSHRFHRLLQV.

Expressed predominantly in root meristematic zones.

The protein resides in the nucleus. Functionally, probable transcription factor that plays a central role in mediating RGF1 hormone peptide signaling leading to the production of reactive oxygen species (ROS) in roots to modulate meristem size and root growth, probably via oxidative post-translational modification of the transcription factor PLETHORA (e.g. PLT1 and PLT2). This chain is Protein RGF1 INDUCIBLE TRANSCRIPTION FACTOR 1, found in Arabidopsis thaliana (Mouse-ear cress).